We begin with the raw amino-acid sequence, 190 residues long: Surfactant protein C (190 aa).

Positions 1-24 (MDVGSKEVLMESPPDYTAVPGGRL) are excised as a propeptide. Residues cysteine 28 and cysteine 29 are each lipidated (S-palmitoyl cysteine). Residues 59 to 190 (HMSQKHTEMV…LCGEVPLYYT (132 aa)) constitute a propeptide that is removed on maturation. The BRICHOS domain occupies 94–190 (FSIGSTGTVV…LCGEVPLYYT (97 aa)). A disulfide bond links cysteine 121 and cysteine 182.

It is found in the secreted. The protein resides in the extracellular space. It localises to the surface film. In terms of biological role, pulmonary surfactant associated proteins promote alveolar stability by lowering the surface tension at the air-liquid interface in the peripheral air spaces. In Bos taurus (Bovine), this protein is Surfactant protein C (SFTPC).